The chain runs to 313 residues: D-beta-D-heptose 7-phosphate kinase (313 aa).

196-199 (NRAE) is an ATP binding site. Residue Asp264 is part of the active site.

It catalyses the reaction D-glycero-beta-D-manno-heptose 7-phosphate + ATP = D-glycero-beta-D-manno-heptose 1,7-bisphosphate + ADP + H(+). It participates in nucleotide-sugar biosynthesis; ADP-L-glycero-beta-D-manno-heptose biosynthesis; ADP-L-glycero-beta-D-manno-heptose from D-glycero-beta-D-manno-heptose 7-phosphate: step 1/4. The protein operates within bacterial outer membrane biogenesis; LPS core biosynthesis. Its function is as follows. Catalyzes the phosphorylation of D-glycero-D-manno-heptose 7-phosphate at the C-1 position to selectively form D-glycero-beta-D-manno-heptose-1,7-bisphosphate. In Bordetella bronchiseptica (strain ATCC BAA-588 / NCTC 13252 / RB50) (Alcaligenes bronchisepticus), this protein is D-beta-D-heptose 7-phosphate kinase (rfaE).